The sequence spans 182 residues: Isopentenyl-diphosphate Delta-isomerase (182 aa).

Mn(2+)-binding residues include His25 and His32. In terms of domain architecture, Nudix hydrolase spans 30–164 (LLHLAFSSWL…PWAFSPWMVM (135 aa)). Cys67 is a catalytic residue. His69 provides a ligand contact to Mn(2+). Glu87 contributes to the Mg(2+) binding site. Positions 114 and 116 each coordinate Mn(2+). Residue Glu116 is part of the active site.

The protein belongs to the IPP isomerase type 1 family. Homodimer. Mg(2+) serves as cofactor. It depends on Mn(2+) as a cofactor.

The protein resides in the cytoplasm. The enzyme catalyses isopentenyl diphosphate = dimethylallyl diphosphate. Its pathway is isoprenoid biosynthesis; dimethylallyl diphosphate biosynthesis; dimethylallyl diphosphate from isopentenyl diphosphate: step 1/1. Its function is as follows. Catalyzes the 1,3-allylic rearrangement of the homoallylic substrate isopentenyl (IPP) to its highly electrophilic allylic isomer, dimethylallyl diphosphate (DMAPP). The polypeptide is Isopentenyl-diphosphate Delta-isomerase (Shigella boydii serotype 18 (strain CDC 3083-94 / BS512)).